The primary structure comprises 266 residues: Non-structural maintenance of chromosomes element 1 homolog (266 aa).

Residues 1–102 (MQGNTRRTGV…SVSKMASDFA (102 aa)) are interaction with NSMCE3. The segment at 191 to 232 (CNICRSLLIQGQSCETCGIRMHLPCVAKYFQSSSEPHCPHCN) adopts an RING-type; atypical zinc-finger fold. Residues 243–252 (FDPEKERETG) are compositionally biased toward basic and acidic residues. The tract at residues 243 to 266 (FDPEKERETGMSRSNKRPSRSRQH) is disordered. Basic residues predominate over residues 256-266 (SNKRPSRSRQH).

It belongs to the NSE1 family. Component of the SMC5-SMC6 complex which consists at least of SMC5, SMC6, NSMCE2, NSMCE1, NSMCE4A or EID3 and NSMCE3. NSMCE1, NSMCE4A or EID3 and NSMCE3 probably form a subcomplex that bridges the head domains of the SMC5-SMC6 heterodimer. Interacts with NSMCE3. Ubiquitinated.

The protein resides in the nucleus. The protein localises to the chromosome. It is found in the telomere. It carries out the reaction S-ubiquitinyl-[E2 ubiquitin-conjugating enzyme]-L-cysteine + [acceptor protein]-L-lysine = [E2 ubiquitin-conjugating enzyme]-L-cysteine + N(6)-ubiquitinyl-[acceptor protein]-L-lysine.. Its function is as follows. RING-type zinc finger-containing E3 ubiquitin ligase that assembles with melanoma antigen protein (MAGE) to catalyze the direct transfer of ubiquitin from E2 ubiquitin-conjugating enzyme to a specific substrate. Within MAGE-RING ubiquitin ligase complex, MAGE stimulates and specifies ubiquitin ligase activity likely through recruitment and/or stabilization of the E2 ubiquitin-conjugating enzyme at the E3:substrate complex. Involved in maintenance of genome integrity, DNA damage response and DNA repair. NSMCE3/MAGEG1 and NSMCE1 ubiquitin ligase are components of SMC5-SMC6 complex and may positively regulate homologous recombination-mediated DNA repair. The sequence is that of Non-structural maintenance of chromosomes element 1 homolog (NSMCE1) from Bos taurus (Bovine).